The following is a 361-amino-acid chain: Peptide chain release factor 1 (361 aa).

Gln235 carries the N5-methylglutamine modification. Residues 288–307 (AARSADRKDQVGSGDRSERI) form a disordered region.

This sequence belongs to the prokaryotic/mitochondrial release factor family. In terms of processing, methylated by PrmC. Methylation increases the termination efficiency of RF1.

Its subcellular location is the cytoplasm. Its function is as follows. Peptide chain release factor 1 directs the termination of translation in response to the peptide chain termination codons UAG and UAA. The protein is Peptide chain release factor 1 of Nitrobacter hamburgensis (strain DSM 10229 / NCIMB 13809 / X14).